We begin with the raw amino-acid sequence, 91 residues long: UPF0335 protein BBta_6866 (91 aa).

This sequence belongs to the UPF0335 family.

The polypeptide is UPF0335 protein BBta_6866 (Bradyrhizobium sp. (strain BTAi1 / ATCC BAA-1182)).